The primary structure comprises 170 residues: Adenine phosphoribosyltransferase (170 aa).

It belongs to the purine/pyrimidine phosphoribosyltransferase family. In terms of assembly, homodimer.

Its subcellular location is the cytoplasm. It carries out the reaction AMP + diphosphate = 5-phospho-alpha-D-ribose 1-diphosphate + adenine. It participates in purine metabolism; AMP biosynthesis via salvage pathway; AMP from adenine: step 1/1. Catalyzes a salvage reaction resulting in the formation of AMP, that is energically less costly than de novo synthesis. The polypeptide is Adenine phosphoribosyltransferase (Mycoplasmopsis agalactiae (strain NCTC 10123 / CIP 59.7 / PG2) (Mycoplasma agalactiae)).